Here is a 106-residue protein sequence, read N- to C-terminus: uncharacterized protein (106 aa).

Transmembrane regions (helical) follow at residues 46–68 and 73–92; these read LLQEIILFVFCALMVVSAAILAF and AVFIVLQVCVLAVLPILIAA.

The protein localises to the cell membrane. This is an uncharacterized protein from Bacillus subtilis (strain 168).